A 414-amino-acid chain; its full sequence is eIF5-mimic protein 1 (414 aa).

Positions 1-22 are disordered; it reads MNKNQKPVLTGQRFKTRKRDEK. The W2 domain maps to 248-414; the sequence is VQQSLGTRKE…LQNAEEEFRI (167 aa).

This sequence belongs to the BZW family.

It is found in the cytoplasm. Translation initiation regulator which may repress non-AUG initiated translation and repeat-associated non-AUG (RAN) initiated translation by acting as a competitive inhibitor of eukaryotic translation initiation factor 5 (EIF5) function. This Gallus gallus (Chicken) protein is eIF5-mimic protein 1 (BZW2).